Here is a 169-residue protein sequence, read N- to C-terminus: Allophycocyanin subunit beta-18 (169 aa).

N72 carries the post-translational modification N4-methylasparagine. (2R,3E)-phycocyanobilin is bound at residue C82.

The protein belongs to the phycobiliprotein family. In terms of assembly, heterodimer of ApcE and this beta chain. Contains one covalently linked bilin chromophore.

Its subcellular location is the cellular thylakoid membrane. A variant beta-allophycocyanin (AP) which forms a complex with ApcE, a phycobilisome terminal emitter that influences energy transfer to photosystem II. In Synechocystis sp. (strain ATCC 27184 / PCC 6803 / Kazusa), this protein is Allophycocyanin subunit beta-18 (apcF).